The following is a 131-amino-acid chain: D-ribose pyranase (131 aa).

H20 acts as the Proton donor in catalysis. Substrate contacts are provided by residues D28, H98, and 120–122 (YAN).

Belongs to the RbsD / FucU family. RbsD subfamily. Homodecamer.

It localises to the cytoplasm. The catalysed reaction is beta-D-ribopyranose = beta-D-ribofuranose. It functions in the pathway carbohydrate metabolism; D-ribose degradation; D-ribose 5-phosphate from beta-D-ribopyranose: step 1/2. Catalyzes the interconversion of beta-pyran and beta-furan forms of D-ribose. The sequence is that of D-ribose pyranase from Enterococcus faecalis (strain ATCC 700802 / V583).